The sequence spans 174 residues: Shikimate kinase 2 (174 aa).

Residue 12–17 (GCGKTT) coordinates ATP. The Mg(2+) site is built by threonine 16 and aspartate 32. Substrate contacts are provided by aspartate 34, arginine 58, and glycine 79. Residues 112 to 126 (QAAPEEDLRPTLTGK) form an LID domain region. Arginine 120 contributes to the ATP binding site. Position 139 (arginine 139) interacts with substrate.

The protein belongs to the shikimate kinase family. AroL subfamily. In terms of assembly, monomer. Mg(2+) is required as a cofactor.

Its subcellular location is the cytoplasm. The enzyme catalyses shikimate + ATP = 3-phosphoshikimate + ADP + H(+). Its pathway is metabolic intermediate biosynthesis; chorismate biosynthesis; chorismate from D-erythrose 4-phosphate and phosphoenolpyruvate: step 5/7. In terms of biological role, catalyzes the specific phosphorylation of the 3-hydroxyl group of shikimic acid using ATP as a cosubstrate. The protein is Shikimate kinase 2 of Shigella dysenteriae serotype 1 (strain Sd197).